The chain runs to 590 residues: Probable metalloendopeptidase G1-type (590 aa).

Histidine 41 provides a ligand contact to Zn(2+). Glutamate 44 is a catalytic residue. Histidine 45 is a Zn(2+) binding site.

It belongs to the peptidase M44 family. Zn(2+) is required as a cofactor.

Its function is as follows. Seems to be involved in viral proteins maturation by cleavage at Ala-Gly-|-Xaa motifs. The protein is Probable metalloendopeptidase G1-type of Oryctolagus cuniculus (Rabbit).